The chain runs to 268 residues: Thiazole synthase (268 aa).

Lysine 100 (schiff-base intermediate with DXP) is an active-site residue. 1-deoxy-D-xylulose 5-phosphate contacts are provided by residues glycine 161, 187-188 (AG), and 209-210 (NT). The tract at residues 248 to 268 (ASPSSPAEGMFTGTQHPAANS) is disordered. Positions 259–268 (TGTQHPAANS) are enriched in polar residues.

The protein belongs to the ThiG family. As to quaternary structure, homotetramer. Forms heterodimers with either ThiH or ThiS.

It localises to the cytoplasm. The enzyme catalyses [ThiS sulfur-carrier protein]-C-terminal-Gly-aminoethanethioate + 2-iminoacetate + 1-deoxy-D-xylulose 5-phosphate = [ThiS sulfur-carrier protein]-C-terminal Gly-Gly + 2-[(2R,5Z)-2-carboxy-4-methylthiazol-5(2H)-ylidene]ethyl phosphate + 2 H2O + H(+). It functions in the pathway cofactor biosynthesis; thiamine diphosphate biosynthesis. Functionally, catalyzes the rearrangement of 1-deoxy-D-xylulose 5-phosphate (DXP) to produce the thiazole phosphate moiety of thiamine. Sulfur is provided by the thiocarboxylate moiety of the carrier protein ThiS. In vitro, sulfur can be provided by H(2)S. In Nitrosomonas europaea (strain ATCC 19718 / CIP 103999 / KCTC 2705 / NBRC 14298), this protein is Thiazole synthase.